We begin with the raw amino-acid sequence, 194 residues long: ATP synthase subunit b 1 (194 aa).

A helical membrane pass occupies residues 1–21 (MLLGTVVTVLSTLPAIAYAMD).

Belongs to the ATPase B chain family. In terms of assembly, F-type ATPases have 2 components, F(1) - the catalytic core - and F(0) - the membrane proton channel. F(1) has five subunits: alpha(3), beta(3), gamma(1), delta(1), epsilon(1). F(0) has three main subunits: a(1), b(2) and c(10-14). The alpha and beta chains form an alternating ring which encloses part of the gamma chain. F(1) is attached to F(0) by a central stalk formed by the gamma and epsilon chains, while a peripheral stalk is formed by the delta and b chains.

Its subcellular location is the cell inner membrane. Its function is as follows. F(1)F(0) ATP synthase produces ATP from ADP in the presence of a proton or sodium gradient. F-type ATPases consist of two structural domains, F(1) containing the extramembraneous catalytic core and F(0) containing the membrane proton channel, linked together by a central stalk and a peripheral stalk. During catalysis, ATP synthesis in the catalytic domain of F(1) is coupled via a rotary mechanism of the central stalk subunits to proton translocation. Functionally, component of the F(0) channel, it forms part of the peripheral stalk, linking F(1) to F(0). The protein is ATP synthase subunit b 1 of Granulibacter bethesdensis (strain ATCC BAA-1260 / CGDNIH1).